The following is a 366-amino-acid chain: Alanine racemase (366 aa).

Lysine 40 functions as the Proton acceptor; specific for D-alanine in the catalytic mechanism. N6-(pyridoxal phosphate)lysine is present on lysine 40. Arginine 136 provides a ligand contact to substrate. The active-site Proton acceptor; specific for L-alanine is the tyrosine 263. A substrate-binding site is contributed by methionine 310.

Belongs to the alanine racemase family. Requires pyridoxal 5'-phosphate as cofactor.

The catalysed reaction is L-alanine = D-alanine. The protein operates within amino-acid biosynthesis; D-alanine biosynthesis; D-alanine from L-alanine: step 1/1. In terms of biological role, catalyzes the interconversion of L-alanine and D-alanine. May also act on other amino acids. This chain is Alanine racemase (alr), found in Streptococcus pyogenes serotype M12 (strain MGAS2096).